Consider the following 212-residue polypeptide: 2-C-methyl-D-erythritol 4-phosphate cytidylyltransferase (212 aa).

The protein belongs to the IspD/TarI cytidylyltransferase family. IspD subfamily.

The enzyme catalyses 2-C-methyl-D-erythritol 4-phosphate + CTP + H(+) = 4-CDP-2-C-methyl-D-erythritol + diphosphate. Its pathway is isoprenoid biosynthesis; isopentenyl diphosphate biosynthesis via DXP pathway; isopentenyl diphosphate from 1-deoxy-D-xylulose 5-phosphate: step 2/6. Its function is as follows. Catalyzes the formation of 4-diphosphocytidyl-2-C-methyl-D-erythritol from CTP and 2-C-methyl-D-erythritol 4-phosphate (MEP). The chain is 2-C-methyl-D-erythritol 4-phosphate cytidylyltransferase from Chlamydia felis (strain Fe/C-56) (Chlamydophila felis).